Consider the following 157-residue polypeptide: 2-C-methyl-D-erythritol 2,4-cyclodiphosphate synthase (157 aa).

Residues Asp9 and His11 each contribute to the a divalent metal cation site. Residues Asp9–His11 and His35–Ser36 contribute to the 4-CDP-2-C-methyl-D-erythritol 2-phosphate site. His43 lines the a divalent metal cation pocket. 4-CDP-2-C-methyl-D-erythritol 2-phosphate is bound by residues Asp57–Gly59, Phe62–Asp66, Thr133–Glu136, Phe140, and Lys143.

Belongs to the IspF family. As to quaternary structure, homotrimer. It depends on a divalent metal cation as a cofactor.

It catalyses the reaction 4-CDP-2-C-methyl-D-erythritol 2-phosphate = 2-C-methyl-D-erythritol 2,4-cyclic diphosphate + CMP. It functions in the pathway isoprenoid biosynthesis; isopentenyl diphosphate biosynthesis via DXP pathway; isopentenyl diphosphate from 1-deoxy-D-xylulose 5-phosphate: step 4/6. Involved in the biosynthesis of isopentenyl diphosphate (IPP) and dimethylallyl diphosphate (DMAPP), two major building blocks of isoprenoid compounds. Catalyzes the conversion of 4-diphosphocytidyl-2-C-methyl-D-erythritol 2-phosphate (CDP-ME2P) to 2-C-methyl-D-erythritol 2,4-cyclodiphosphate (ME-CPP) with a corresponding release of cytidine 5-monophosphate (CMP). This chain is 2-C-methyl-D-erythritol 2,4-cyclodiphosphate synthase, found in Enterococcus faecalis (strain ATCC 700802 / V583).